Here is a 419-residue protein sequence, read N- to C-terminus: MRNSNRGPAFLILFATLMAAAGDGVSIVAFPWLVLQREGSAGQASIVASATMLPLLFATLVAGTAVDYFGRRRVSMVADALSGAAVAGVPLVAWGYGGDAVNVLVLAVLAALAAAFGPAGMTARDSMLPEAAARAGWSLDRINGAYEAILNLAFIVGPAIGGLMIATVGGITTMWITATAFGLSILAIAALQLEGAGKPHHTSRPQGLVSGIAEGLRFVWNLRVLRTLGMIDLTVTALYLPMESVLFPKYFTDHQQPVQLGWALMAIAGGGLVGALGYAVLAIRVPRRVTMSTAVLTLGLASMVIAFLPPLPVIMVLCAVVGLVYGPIQPIYNYVIQTRAAQHLRGRVVGVMTSLAYAAGPLGLLLAGPLTDAAGLHATFLALALPIVCTGLVAIRLPALRELDLAPQADIDRPVGSAQ.

The next 12 membrane-spanning stretches (helical) occupy residues 7-29, 44-66, 73-95, 100-122, 149-171, 175-197, 218-240, 260-282, 289-308, 313-335, 348-370, and 375-397; these read GPAFLILFATLMAAAGDGVSIVA, ASIVASATMLPLLFATLVAGTAV, RVSMVADALSGAAVAGVPLVAWG, AVNVLVLAVLAALAAAFGPAGMT, ILNLAFIVGPAIGGLMIATVGGI, WITATAFGLSILAIAALQLEGAG, FVWNLRVLRTLGMIDLTVTALYL, LGWALMAIAGGGLVGALGYAVLA, VTMSTAVLTLGLASMVIAFL, VIMVLCAVVGLVYGPIQPIYNYV, VVGVMTSLAYAAGPLGLLLAGPL, and GLHATFLALALPIVCTGLVAIRL.

This sequence belongs to the major facilitator superfamily. Drug:H(+) antiporter-3 (DHA3) (TC 2.A.1.21) family.

It is found in the cell inner membrane. Its activity is regulated as follows. Inhibited by piperine, verapamil and verapamil analogs. In terms of biological role, efflux pump that contributes to intrinsic antibiotic resistance. The pump uses the electrochemical gradient as a source of energy. Confers resistance to rifampicin. Confers low-level resistance to tetracycline and to several aminoglycosides, including streptomycin, gentamicin, 2'-N-ethylnetilmicin and 6'-N-ethylnetilmicin. The sequence is that of Multidrug efflux pump Tap from Mycobacterium tuberculosis (strain ATCC 25618 / H37Rv).